Consider the following 222-residue polypeptide: Lipid transferase CIDEC (222 aa).

Residues 1 to 19 (MAMYTAVSTSVVTQQQLSE) show a composition bias toward polar residues. Disordered regions lie at residues 1-33 (MAMY…CRVT) and 203-222 (EQPP…KMLQ). The required for liquid-liquid phase separation (LLPS) stretch occupies residues 1 to 33 (MAMYTAVSTSVVTQQQLSEPSAEAPRARPCRVT). One can recognise a CIDE-N domain in the interval 26 to 103 (RARPCRVTTA…VLHKGQKWQP (78 aa)).

This sequence belongs to the CIDE family. As to quaternary structure, homodimer. Homooligomer; undergoes liquid-liquid phase separation (LLPS) via its N-terminus, facilitating lipid droplet fusion, occurs at the lipid droplet contact sites. Interacts with CIDEA. Interacts with PLIN1. Interacts with NFAT5; this interaction is direct and retains NFAT5 in the cytoplasm. Interacts with CEBPB. Interacts with isoform CLSTN3beta of CLSTN3; inhibiting the lipid transferase activity of CIDEC. Ubiquitinated and targeted to proteasomal degradation, resulting in a short half-life (about 15 minutes in 3T3-L1 cells). Protein stability depends on triaclyglycerol synthesis, fatty acid availability and lipid droplet formation.

It localises to the lipid droplet. The protein localises to the endoplasmic reticulum. It is found in the nucleus. It catalyses the reaction a triacyl-sn-glycerol(in) = a triacyl-sn-glycerol(out). In terms of biological role, lipid transferase specifically expressed in white adipose tissue, which promotes unilocular lipid droplet formation by mediating lipid droplet fusion. Lipid droplet fusion promotes their enlargement, restricting lipolysis and favoring lipid storage. Localizes on the lipid droplet surface, at focal contact sites between lipid droplets, and mediates atypical lipid droplet fusion by undergoing liquid-liquid phase separation (LLPS) and promoting directional net neutral lipid transfer from the smaller to larger lipid droplets. The transfer direction may be driven by the internal pressure difference between the contacting lipid droplet pair. Its role in neutral lipid transfer and lipid droplet enlargement is activated by the interaction with PLIN1. May also act as a CEBPB coactivator in the white adipose tissue to control the expression of a subset of CEBPB downstream target genes, including SOCS1, SOCS3, TGFB1, TGFBR1, ID2 and XDH. When overexpressed in preadipocytes, induces apoptosis or increases cell susceptibility to apoptosis induced by serum deprivation or TGFB treatment. The sequence is that of Lipid transferase CIDEC from Bos taurus (Bovine).